The following is a 178-amino-acid chain: ATP-dependent protease subunit HslV (178 aa).

Threonine 7 is a catalytic residue. 3 residues coordinate Na(+): glycine 162, cysteine 165, and threonine 168.

Belongs to the peptidase T1B family. HslV subfamily. A double ring-shaped homohexamer of HslV is capped on each side by a ring-shaped HslU homohexamer. The assembly of the HslU/HslV complex is dependent on binding of ATP.

The protein resides in the cytoplasm. The enzyme catalyses ATP-dependent cleavage of peptide bonds with broad specificity.. With respect to regulation, allosterically activated by HslU binding. Its function is as follows. Protease subunit of a proteasome-like degradation complex believed to be a general protein degrading machinery. The protein is ATP-dependent protease subunit HslV of Burkholderia mallei (strain ATCC 23344).